The following is a 571-amino-acid chain: MSFKMTQNQYTSLYGPTVGDSIRLGDTNLFAQIEKDYAVYGEEATFGGGKSIRDGMAQNPRVTRDDVNVADLVISNAVIIDYDKVVKADIGIKNGYIFAIGNAGNPDIMDNVDIIIGSTTDIIAAEGKIVTAGGIDTHVHFINPEQAEVALESGITTHIGGGTGASEGSKATTVTPGPWHIHRMLEAAEGLPINVGFTGKGQATNPTALIEQINAGAIGLKVHEDWGATPSALSHALDVADEFDVQIALHADTLNEAGFMEDTMAAVKDRVLHMYHTEGAGGGHAPDLIKSAAFSNILPSSTNPTLPYTHNTVDEHLDMVMITHHLNAAIPEDIAFADSRIRKETIAAEDVLQDMGVFSMISSDSQAMGRVGEVITRTWQVAHRMKEQRGPLDGDFEHNDNNRIKRYIAKYTINPAITHGISEYVGSIEPGKLADIVLWDPIFFGVKPELVVKGGLINSAVNGDANGSIPTSEPMKYRKMYGQYGGNLTSTSMTFVSKTAYENGINRALNLKRMVRPVKNIRQLSKADMKNNSATPKLDVDPQTYEVYVDGENITSNAATELPLTQRYFLF.

Ni(2+) contacts are provided by histidine 138, histidine 140, and lysine 221. Lysine 221 is subject to N6-carboxylysine. Histidine 223 contributes to the substrate binding site. Ni(2+)-binding residues include histidine 250 and histidine 276. Histidine 324 serves as the catalytic Proton donor. Aspartate 364 is a Ni(2+) binding site.

Belongs to the metallo-dependent hydrolases superfamily. Urease alpha subunit family. Heterotrimer of UreA (gamma), UreB (beta) and UreC (alpha) subunits. Three heterotrimers associate to form the active enzyme. The cofactor is Ni cation. Post-translationally, carboxylation allows a single lysine to coordinate two nickel ions.

It localises to the cytoplasm. It carries out the reaction urea + 2 H2O + H(+) = hydrogencarbonate + 2 NH4(+). The protein operates within nitrogen metabolism; urea degradation; CO(2) and NH(3) from urea (urease route): step 1/1. The chain is Urease subunit alpha from Staphylococcus aureus (strain JH9).